The sequence spans 283 residues: Diaminopimelate epimerase (283 aa).

Substrate contacts are provided by N13, Q45, and N65. Residue C74 is the Proton donor of the active site. Substrate contacts are provided by residues 75-76, N156, N190, and 208-209; these read GN and ER. The Proton acceptor role is filled by C217. Residue 218 to 219 coordinates substrate; the sequence is GS.

This sequence belongs to the diaminopimelate epimerase family. Homodimer.

It localises to the cytoplasm. It catalyses the reaction (2S,6S)-2,6-diaminopimelate = meso-2,6-diaminopimelate. It functions in the pathway amino-acid biosynthesis; L-lysine biosynthesis via DAP pathway; DL-2,6-diaminopimelate from LL-2,6-diaminopimelate: step 1/1. Catalyzes the stereoinversion of LL-2,6-diaminopimelate (L,L-DAP) to meso-diaminopimelate (meso-DAP), a precursor of L-lysine and an essential component of the bacterial peptidoglycan. The protein is Diaminopimelate epimerase of Bartonella quintana (strain Toulouse) (Rochalimaea quintana).